A 226-amino-acid polypeptide reads, in one-letter code: E3 ubiquitin-protein ligase RNF186 (226 aa).

An RING-type zinc finger spans residues cysteine 39–arginine 85. 2 helical membrane passes run histidine 157–isoleucine 177 and tryptophan 179–proline 199.

In terms of assembly, interacts with BNIP1. In terms of processing, polyubiquitinated. 'Lys-29'-linked autoubiquitination leads to proteasomal degradation.

It is found in the endoplasmic reticulum membrane. It catalyses the reaction S-ubiquitinyl-[E2 ubiquitin-conjugating enzyme]-L-cysteine + [acceptor protein]-L-lysine = [E2 ubiquitin-conjugating enzyme]-L-cysteine + N(6)-ubiquitinyl-[acceptor protein]-L-lysine.. Its pathway is protein modification; protein ubiquitination. Its function is as follows. E3 ubiquitin protein ligase that is part of an apoptotic signaling pathway activated by endoplasmic reticulum stress. Stimulates the expression of proteins specific of the unfolded protein response (UPR), ubiquitinates BNIP1 and regulates its localization to the mitochondrion and induces calcium release from the endoplasmic reticulum that ultimately leads to cell apoptosis. Plays a role in the maintenance of intestinal homeostasis and clearance of enteric pathogens. Upon NOD2 stimulation, ubiquitinates the ER stress sensor activating transcription factor 6/ATF6 and promotes the unfolded protein response UPR. Participates in basal level of autophagy maintenance by regulating the ubiquitination of EPHB2. Upon stimulation by ligand EFNB1, ubiquitinates EPHB2 and further recruits MAP1LC3B for autophagy induction. Controls nutrient sensing by ubiquitinating Sestrin-2/SESN2, which is an intracellular sensor of cytosolic leucine and inhibitor of mTORC1 activity. The chain is E3 ubiquitin-protein ligase RNF186 from Mus musculus (Mouse).